We begin with the raw amino-acid sequence, 282 residues long: Deoxyribonuclease-1 (282 aa).

Residues 1-22 (MRGMKLLGALLALAALLQGAVS) form the signal peptide. Asn40 is a glycosylation site (N-linked (GlcNAc...) asparagine). Glu100 is a catalytic residue. The cysteines at positions 123 and 126 are disulfide-linked. N-linked (GlcNAc...) asparagine glycosylation occurs at Asn128. The active site involves His156. A disulfide bond links Cys195 and Cys231.

Belongs to the DNase I family. It depends on Ca(2+) as a cofactor. Requires Mg(2+) as cofactor. In terms of tissue distribution, principally in tissues of the digestive system. Highest levels found in urine, but also relatively abundant in semen and saliva.

The protein localises to the secreted. The protein resides in the zymogen granule. It localises to the nucleus envelope. It carries out the reaction Endonucleolytic cleavage to 5'-phosphodinucleotide and 5'-phosphooligonucleotide end-products.. Functionally, serum endocuclease secreted into body fluids by a wide variety of exocrine and endocrine organs. Expressed by non-hematopoietic tissues and preferentially cleaves protein-free DNA. Among other functions, seems to be involved in cell death by apoptosis. Binds specifically to G-actin and blocks actin polymerization. Together with DNASE1L3, plays a key role in degrading neutrophil extracellular traps (NETs). NETs are mainly composed of DNA fibers and are released by neutrophils to bind pathogens during inflammation. Degradation of intravascular NETs by DNASE1 and DNASE1L3 is required to prevent formation of clots that obstruct blood vessels and cause organ damage following inflammation. The protein is Deoxyribonuclease-1 of Homo sapiens (Human).